A 259-amino-acid polypeptide reads, in one-letter code: UPF0246 protein Avin_11220 (259 aa).

Belongs to the UPF0246 family.

This chain is UPF0246 protein Avin_11220, found in Azotobacter vinelandii (strain DJ / ATCC BAA-1303).